We begin with the raw amino-acid sequence, 143 residues long: Trypsin inhibitor CMc (143 aa).

The N-terminal stretch at Met1–Ala24 is a signal peptide.

Belongs to the protease inhibitor I6 (cereal trypsin/alpha-amylase inhibitor) family. Endosperm.

The protein resides in the secreted. Trypsin inhibitor. No alpha-amylase inhibition detected. In Hordeum vulgare (Barley), this protein is Trypsin inhibitor CMc (ITR2).